The chain runs to 318 residues: Olfactory receptor 13C9 (318 aa).

At 1 to 25 (MEWENQTILVEFFLKGHSVHPRLEL) the chain is on the extracellular side. The N-linked (GlcNAc...) asparagine glycan is linked to Asn-5. Residues 26 to 46 (LFFVLIFIMYVVILLGNGTLI) form a helical membrane-spanning segment. The Cytoplasmic portion of the chain corresponds to 47–54 (LISILDPH). A helical membrane pass occupies residues 55-75 (LHTPMYFFLGNLSFLDICYTT). Topologically, residues 76–99 (TSIPSTLVSFLSERKTISFSGCAV) are extracellular. Cys-97 and Cys-189 are disulfide-bonded. The chain crosses the membrane as a helical span at residues 100 to 120 (QMFLGLAMGTTECVLLGMMAF). Residues 121 to 139 (DRYVAICNPLRYPIIMSKN) are Cytoplasmic-facing. Residues 140–160 (AYVPMAVGSWFAGIVNSAVQT) form a helical membrane-spanning segment. Over 161-197 (TFVVQLPFCRKNVINHFSCEILAVMKLACADISGNEF) the chain is Extracellular. The chain crosses the membrane as a helical span at residues 198-217 (LMLVATILFTLMPLLLIVIS). Residues 218–237 (YSLIISSILKIHSSEGRSKA) are Cytoplasmic-facing. A helical membrane pass occupies residues 238 to 258 (FSTCSAHLTVVIIFYGTILFM). At 259-277 (YMKPKSKETLNSDDLDATD) the chain is on the extracellular side. A helical transmembrane segment spans residues 278 to 298 (KIISMFYGVMTPMMNPLIYSL). The Cytoplasmic portion of the chain corresponds to 299–318 (RNKDVKEAVKHLPNRRFFSK).

It belongs to the G-protein coupled receptor 1 family.

Its subcellular location is the cell membrane. Odorant receptor. This chain is Olfactory receptor 13C9 (OR13C9), found in Homo sapiens (Human).